A 635-amino-acid polypeptide reads, in one-letter code: Biosynthetic arginine decarboxylase (635 aa).

Residue Lys100 is modified to N6-(pyridoxal phosphate)lysine. 282 to 292 (VDIGGGLGVDY) provides a ligand contact to substrate.

This sequence belongs to the Orn/Lys/Arg decarboxylase class-II family. SpeA subfamily. Requires Mg(2+) as cofactor. It depends on pyridoxal 5'-phosphate as a cofactor.

The enzyme catalyses L-arginine + H(+) = agmatine + CO2. Its pathway is amine and polyamine biosynthesis; agmatine biosynthesis; agmatine from L-arginine: step 1/1. Functionally, catalyzes the biosynthesis of agmatine from arginine. In Geobacter sulfurreducens (strain ATCC 51573 / DSM 12127 / PCA), this protein is Biosynthetic arginine decarboxylase.